Reading from the N-terminus, the 120-residue chain is Protein EPIDERMAL PATTERNING FACTOR 2 (120 aa).

An N-terminal signal peptide occupies residues 1-25 (MTKFVRKYMFCLVLVFAACSLVVNS). 4 disulfide bridges follow: cysteine 76/cysteine 107, cysteine 80/cysteine 86, cysteine 83/cysteine 109, and cysteine 95/cysteine 101.

Belongs to the plant cysteine rich small secretory peptide family. Epidermal patterning factor subfamily. In terms of assembly, interacts with ERECTA, ERL1 and TMM. Expressed in leaves, especially by the MMCs and their early descendants cells (stomatal lineage cells) including guard mother cells (GMCs).

Its subcellular location is the secreted. Controls stomatal patterning. Regulates the number of cells that enter, and remain in, the stomatal lineage by inhibiting protodermal cells from adopting the meristemoid mother cell (MMC) fate in a non-cell-autonomous manner. Mediates stomatal development inhibition. MEPF2: mobile signal controlling stomatal development in a non-cell-autonomous manner. Uses ERECTA as major receptor. Inactivated by cleavage by CRSP (AC Q9LNU1). May act by competing with somatogen (AC Q9SV72) for the same receptor, TMM (AC Q9SSD1). In Arabidopsis thaliana (Mouse-ear cress), this protein is Protein EPIDERMAL PATTERNING FACTOR 2.